Reading from the N-terminus, the 87-residue chain is uncharacterized protein (87 aa).

This is an uncharacterized protein from Escherichia coli.